A 282-amino-acid polypeptide reads, in one-letter code: Pantothenate synthetase (282 aa).

ATP is bound at residue 30 to 37; that stretch reads MGFLHDGH. Residue H37 is the Proton donor of the active site. Residue Q60 participates in (R)-pantoate binding. A beta-alanine-binding site is contributed by Q60. An ATP-binding site is contributed by 146-149; sequence GQKD. Q152 provides a ligand contact to (R)-pantoate. ATP-binding positions include I175 and 183–186; that span reads KSSR.

It belongs to the pantothenate synthetase family. In terms of assembly, homodimer.

It localises to the cytoplasm. The catalysed reaction is (R)-pantoate + beta-alanine + ATP = (R)-pantothenate + AMP + diphosphate + H(+). It functions in the pathway cofactor biosynthesis; (R)-pantothenate biosynthesis; (R)-pantothenate from (R)-pantoate and beta-alanine: step 1/1. In terms of biological role, catalyzes the condensation of pantoate with beta-alanine in an ATP-dependent reaction via a pantoyl-adenylate intermediate. This is Pantothenate synthetase from Campylobacter jejuni (strain RM1221).